A 486-amino-acid chain; its full sequence is Non-structural protein 1 (486 aa).

An RNA-binding region spans residues 1 to 81; it reads MATFKDACYY…CFLDDEPHLL (81 aa). Residues 42 to 79 form a zinc-binding domain region; the sequence is CLDCCQHTDLTYCRGCTMYHVCQWCSQYGRCFLDDEPH. Positions 82–176 are important for cytoskeleton localization; the sequence is RMRTFKNEIT…VNQTPFSFTN (95 aa). The interaction with host IRF3 stretch occupies residues 317-486; it reads EVHNCKWCSV…EYDSGISDVE (170 aa). Residues 479–483 carry the IKBKB-like degron (ILD) motif motif; the sequence is DSGIS. Residues 480 to 483 carry the pLxIS motif motif; sequence SGIS.

It belongs to the rotavirus NSP1 family. In terms of assembly, interacts (via C-terminus) with host IRF3; this interaction leads to IRF3 degradation. Interacts with host IRF7; this interaction leads to IRF7 degradation. Interacts with host CUL1 and CUL3. Interacts with host BTRC. Post-translationally, the C-terminal region is phosphorylated by host CKII/CSNK2A1. Phosphorylation of the DSGXS motif is essential for host NF-kappa-B inhibition.

It localises to the host cytoplasm. The protein localises to the host cytoskeleton. Plays a role in the inhibition of host innate immunity by inducing the degradation of key host factors required to activate interferon production such as IRF3, IRF5 or IRF7. Associates with components of cullin RING ligases (CRLs) including CUL1 or CUL3, which are essential multisubunit ubiquitination complexes, to modulate their activities. Recognizes the host NF-kappa-B regulator BTRC through the presence of a DSGXS motif in the C-terminal substrate recognition domain. The chain is Non-structural protein 1 from Rotavirus A (strain RVA/Human/United States/Wa/1974/G1P1A[8]) (RV-A).